The following is a 477-amino-acid chain: NADH-quinone oxidoreductase subunit N (477 aa).

13 helical membrane passes run 7–27 (VLAHALPELILAGGVLLLILI), 37–57 (GPMTELAVGLLGIAILTLVLG), 77–97 (FMKVLVLIGSLVSLIMGQTYL), 109–129 (ILILLSTLGMLMLISATGLIA), 162–182 (FVLGALSSGMLLYGASLIYGF), 201–221 (LGVVFGLVFLTAGLAFKMSTV), 233–253 (GAPTPVTAFFASAPKLAAIAI), 272–292 (IIVFISILSMALGSFAAIGQT), 297–317 (LMAYSSIGHMGFALVGLAAGT), 323–343 (GVLAYMAIYLVMTLGTFAAIL), 369–389 (AFFLAIMMFSLAGIPPLAGFF), 402–424 (HLYPLAVIGVLCSTVGAYYYLRI), and 446–466 (AVLIVTGLAVLLLCVYPGSFV).

The protein belongs to the complex I subunit 2 family. NDH-1 is composed of 14 different subunits. Subunits NuoA, H, J, K, L, M, N constitute the membrane sector of the complex.

The protein localises to the cell inner membrane. It carries out the reaction a quinone + NADH + 5 H(+)(in) = a quinol + NAD(+) + 4 H(+)(out). NDH-1 shuttles electrons from NADH, via FMN and iron-sulfur (Fe-S) centers, to quinones in the respiratory chain. The immediate electron acceptor for the enzyme in this species is believed to be ubiquinone. Couples the redox reaction to proton translocation (for every two electrons transferred, four hydrogen ions are translocated across the cytoplasmic membrane), and thus conserves the redox energy in a proton gradient. This Beijerinckia indica subsp. indica (strain ATCC 9039 / DSM 1715 / NCIMB 8712) protein is NADH-quinone oxidoreductase subunit N.